Reading from the N-terminus, the 354-residue chain is Ribosomal RNA large subunit methyltransferase M (354 aa).

Residues Ser-183, 216–219 (SPGG), Asp-235, Asp-255, and Asp-271 contribute to the S-adenosyl-L-methionine site. The active-site Proton acceptor is the Lys-300.

This sequence belongs to the class I-like SAM-binding methyltransferase superfamily. RNA methyltransferase RlmE family. RlmM subfamily. Monomer.

The protein resides in the cytoplasm. The catalysed reaction is cytidine(2498) in 23S rRNA + S-adenosyl-L-methionine = 2'-O-methylcytidine(2498) in 23S rRNA + S-adenosyl-L-homocysteine + H(+). In terms of biological role, catalyzes the 2'-O-methylation at nucleotide C2498 in 23S rRNA. The chain is Ribosomal RNA large subunit methyltransferase M from Pseudomonas putida (strain ATCC 47054 / DSM 6125 / CFBP 8728 / NCIMB 11950 / KT2440).